We begin with the raw amino-acid sequence, 347 residues long: 4-hydroxy-2-oxovalerate aldolase 4 (347 aa).

Residues 9-259 (ITIVDTTLRD…DTGVDLFPLI (251 aa)) enclose the Pyruvate carboxyltransferase domain. Substrate-binding positions include 17 to 18 (RD), Ser171, and His198. Position 18 (Asp18) interacts with Mn(2+). Mn(2+) contacts are provided by His198 and His200. Tyr289 is a substrate binding site.

The protein belongs to the 4-hydroxy-2-oxovalerate aldolase family.

It catalyses the reaction (S)-4-hydroxy-2-oxopentanoate = acetaldehyde + pyruvate. The protein is 4-hydroxy-2-oxovalerate aldolase 4 of Rhodococcus opacus (strain B4).